The primary structure comprises 248 residues: tRNA pseudouridine synthase A (248 aa).

The active-site Nucleophile is Asp52. Residue Tyr113 participates in substrate binding.

Belongs to the tRNA pseudouridine synthase TruA family. Homodimer.

The enzyme catalyses uridine(38/39/40) in tRNA = pseudouridine(38/39/40) in tRNA. Its function is as follows. Formation of pseudouridine at positions 38, 39 and 40 in the anticodon stem and loop of transfer RNAs. This Mesorhizobium japonicum (strain LMG 29417 / CECT 9101 / MAFF 303099) (Mesorhizobium loti (strain MAFF 303099)) protein is tRNA pseudouridine synthase A.